We begin with the raw amino-acid sequence, 341 residues long: CRISPR-associated endonuclease Cas1 (341 aa).

Mn(2+)-binding residues include Glu173, His242, and Glu257.

It belongs to the CRISPR-associated endonuclease Cas1 family. In terms of assembly, homodimer, forms a heterotetramer with a Cas2 homodimer. Mg(2+) is required as a cofactor. Mn(2+) serves as cofactor.

Functionally, CRISPR (clustered regularly interspaced short palindromic repeat), is an adaptive immune system that provides protection against mobile genetic elements (viruses, transposable elements and conjugative plasmids). CRISPR clusters contain spacers, sequences complementary to antecedent mobile elements, and target invading nucleic acids. CRISPR clusters are transcribed and processed into CRISPR RNA (crRNA). Acts as a dsDNA endonuclease. Involved in the integration of spacer DNA into the CRISPR cassette. The polypeptide is CRISPR-associated endonuclease Cas1 (Korarchaeum cryptofilum (strain OPF8)).